A 395-amino-acid polypeptide reads, in one-letter code: Phosphoprotein (395 aa).

2 disordered regions span residues 31 to 109 (VETV…DTQL) and 126 to 214 (NKSS…PASV). The span at 65 to 74 (TPDRQNRSDK) shows a compositional bias: basic and acidic residues. 3 stretches are compositionally biased toward polar residues: residues 75-98 (QPST…QPPT), 146-168 (LPTQ…QNRA), and 203-212 (SGQSQDNTPA). The segment at 222 to 285 (DFVQAMMSMM…LGMMKILDPG (64 aa)) is multimerization.

It belongs to the rubulavirus/avulavirus P protein family. As to quaternary structure, homotetramer. Interacts (via multimerization domain) with polymerase L; this interaction forms the polymerase L-P complex. Interacts (via N-terminus) with N0 (via Ncore); this interaction allows P to chaperon N0 to avoid N polymerization before encapsidation. Interacts (via C-terminus) with N-RNA template; this interaction positions the polymerase on the template for both transcription and replication.

In terms of biological role, essential cofactor of the RNA polymerase L that plays a central role in the transcription and replication by forming the polymerase complex with RNA polymerase L and recruiting L to the genomic N-RNA template for RNA synthesis. Also plays a central role in the encapsidation of nascent RNA chains by forming the encapsidation complex with the nucleocapsid protein N (N-P complex). Acts as a chaperone for newly synthesized free N protein, so-called N0, allowing encapsidation of nascent RNA chains during replication. The nucleoprotein protein N prevents excessive phosphorylation of P, which leads to down-regulation of viral transcription/ replication. Participates, together with N, in the formation of viral factories (viroplasms), which are large inclusions in the host cytoplasm where replication takes place. This chain is Phosphoprotein (P/C), found in Gallus gallus (Chicken).